A 273-amino-acid chain; its full sequence is 4-hydroxy-tetrahydrodipicolinate reductase (273 aa).

NAD(+)-binding positions include 12–17 and Glu-38; that span reads GAGGRM. Arg-39 contacts NADP(+). Residues 102–104 and 126–129 contribute to the NAD(+) site; these read GTT and AANF. His-159 functions as the Proton donor/acceptor in the catalytic mechanism. His-160 contributes to the (S)-2,3,4,5-tetrahydrodipicolinate binding site. Lys-163 (proton donor) is an active-site residue. 169–170 is a binding site for (S)-2,3,4,5-tetrahydrodipicolinate; sequence GT.

Belongs to the DapB family. In terms of assembly, homotetramer.

The protein resides in the cytoplasm. The enzyme catalyses (S)-2,3,4,5-tetrahydrodipicolinate + NAD(+) + H2O = (2S,4S)-4-hydroxy-2,3,4,5-tetrahydrodipicolinate + NADH + H(+). The catalysed reaction is (S)-2,3,4,5-tetrahydrodipicolinate + NADP(+) + H2O = (2S,4S)-4-hydroxy-2,3,4,5-tetrahydrodipicolinate + NADPH + H(+). Its pathway is amino-acid biosynthesis; L-lysine biosynthesis via DAP pathway; (S)-tetrahydrodipicolinate from L-aspartate: step 4/4. Its function is as follows. Catalyzes the conversion of 4-hydroxy-tetrahydrodipicolinate (HTPA) to tetrahydrodipicolinate. The chain is 4-hydroxy-tetrahydrodipicolinate reductase from Salmonella choleraesuis (strain SC-B67).